A 181-amino-acid polypeptide reads, in one-letter code: Large ribosomal subunit protein uL6 (181 aa).

This sequence belongs to the universal ribosomal protein uL6 family. As to quaternary structure, part of the 50S ribosomal subunit.

Its function is as follows. This protein binds to the 23S rRNA, and is important in its secondary structure. It is located near the subunit interface in the base of the L7/L12 stalk, and near the tRNA binding site of the peptidyltransferase center. In Rhodopirellula baltica (strain DSM 10527 / NCIMB 13988 / SH1), this protein is Large ribosomal subunit protein uL6.